The primary structure comprises 317 residues: Olfactory receptor 51Q1 (317 aa).

At 1 to 27 (MSQVTNTTQEGIYFILTDIPGFEASHI) the chain is on the extracellular side. Asparagine 6 carries N-linked (GlcNAc...) asparagine glycosylation. Residues 28-48 (WISIPVCCLYTISIMGNTTIL) form a helical membrane-spanning segment. Residues 49 to 56 (TVIRTEPS) are Cytoplasmic-facing. Residues 57–77 (VHQRMYLFLSMLALTDLGLTL) traverse the membrane as a helical segment. Residues 78 to 101 (TTLPTVMQLLWFNVRRISSEACFA) are Extracellular-facing. Cysteine 99 and cysteine 191 are joined by a disulfide. The helical transmembrane segment at 102–122 (QFFFLHGFSFMESSVLLAMSV) threads the bilayer. Topologically, residues 123–141 (DCYVAICCPLHYASILTNE) are cytoplasmic. A helical membrane pass occupies residues 142-162 (VIGRTGLAIICCCVLAVLPSL). The Extracellular portion of the chain corresponds to 163–198 (FLLKRLPFCHSHLLSRSYCLHQDMIRLVCADIRLNS). Residues 199 to 219 (WYGFALALLIIIVDPLLIVIS) form a helical membrane-spanning segment. Residues 220–239 (YTLILKNILGTATWAERLRA) lie on the Cytoplasmic side of the membrane. A helical membrane pass occupies residues 240–260 (LNNCLSHILAVLVLYIPMVGV). Over 261-275 (SMTHRFAKHASPLVH) the chain is Extracellular. Residues 276–296 (VIMANIYLLAPPVMNPIIYSV) traverse the membrane as a helical segment. Topologically, residues 297 to 317 (KNKQIQWGMLNFLSLKNMHSR) are cytoplasmic.

The protein belongs to the G-protein coupled receptor 1 family.

It localises to the cell membrane. In terms of biological role, odorant receptor. This is Olfactory receptor 51Q1 (OR51Q1) from Homo sapiens (Human).